Here is a 557-residue protein sequence, read N- to C-terminus: MALQVMFGLEFFLVLEALLFLFTCYQVVKAGRILDEIQDKLSEVKRGERVGTKRKYGTQNKYTGLSKGLEPEEKLRLGRNTWREIRRKRGKREKKKDQLAEVSRKRSLCSSLDGLGKPALSSSEAGEESSSEETDWEEEAAHYQPANWSRKKPKAAGEGQFADWPQGSRLQGPPYAESPPCVVRQQCAERCAERQCAERQCADSFIPREEQRKIQQAFPVFEGAEGGRVHAPVEYLQIKEIAESVRKYGTNANFTLVQLDRLAGMALTPADWQTVVKAALPSMGKYMEWRALWHEAAQAQARANAAALTPEQRDWTFDLLTGQGAYSADQTNYHWGAYAQISSTAIRPGRRSRAGETTGQLTKIIQGPQESFSDFVARMTEAAERIFGESEQAAPLIEQLIYEQATKECRAVHSPKKEQRLTRLAQGLSRAWGKPRLLKTDNGPAYTSQKFQQFCRQMDVTHLTGLPYNPQGQGIVERAHRTLKAYLIKQKRGTFEETVPRAPRVSVSLALFTLNFLNIDAHGHTAAERHVQSQIGPMRWLNGKMSLIINGMARILS.

Positions 113–172 are disordered; it reads DGLGKPALSSSEAGEESSSEETDWEEEAAHYQPANWSRKKPKAAGEGQFADWPQGSRLQG. Acidic residues predominate over residues 125–138; that stretch reads AGEESSSEETDWEE. One can recognise an Integrase catalytic domain in the interval 344-534; sequence TAIRPGRRSR…TAAERHVQSQ (191 aa).

The polypeptide is IgE-binding protein (Iap) (Mus musculus (Mouse)).